The primary structure comprises 286 residues: Phosducin-like protein 2 (286 aa).

Phosphoserine occurs at positions 35 and 62. The segment at 96-286 (FGEVFHINKP…INDDDDGFFD (191 aa)) is thioredoxin fold.

The protein belongs to the phosducin family. In terms of assembly, interacts with the G protein beta-gamma subunit complex (STE4-STE18 complex). Interacts with CCT2; this interaction leads to inhibition of CCT complex mediated actin folding.

Its subcellular location is the cytoplasm. Functionally, essential for cell growth. Inhibits early G-protein signaling events following pheromone stimulation. Inhibits the folding activity of the chaperonin-containing T-complex (CCT) CCT2 which leads to inhibition of cytoskeletal actin folding. Plays a role in cell cycle progression in G1/S phase. The protein is Phosducin-like protein 2 of Saccharomyces cerevisiae (strain ATCC 204508 / S288c) (Baker's yeast).